A 196-amino-acid polypeptide reads, in one-letter code: MSDERYQQRQQRVKEKVDARVAQAQDERGIIIVFTGNGKGKTTAAFGTATRAVGHGKKVGVVQFIKGTWPNGERNLLEPHGVEFQVMATGFTWDTQNRESDTAACREVWQHAKRMLADSSLDMVLLDELTYMVAYDYLPLEEVVQALNERPHQQTVIITGRGCHRDILELADTVSELRPVKHAFDAGVKAQIGIDY.

36–42 (GNGKGKT) serves as a coordination point for ATP.

It belongs to the Cob(I)alamin adenosyltransferase family.

Its subcellular location is the cytoplasm. It carries out the reaction 2 cob(II)yrinate a,c diamide + reduced [electron-transfer flavoprotein] + 2 ATP = 2 adenosylcob(III)yrinate a,c-diamide + 2 triphosphate + oxidized [electron-transfer flavoprotein] + 3 H(+). The enzyme catalyses 2 cob(II)alamin + reduced [electron-transfer flavoprotein] + 2 ATP = 2 adenosylcob(III)alamin + 2 triphosphate + oxidized [electron-transfer flavoprotein] + 3 H(+). Its pathway is cofactor biosynthesis; adenosylcobalamin biosynthesis; adenosylcobalamin from cob(II)yrinate a,c-diamide: step 2/7. Required for both de novo synthesis of the corrin ring for the assimilation of exogenous corrinoids. Participates in the adenosylation of a variety of incomplete and complete corrinoids. The polypeptide is Corrinoid adenosyltransferase (btuR) (Escherichia coli O6:H1 (strain CFT073 / ATCC 700928 / UPEC)).